The primary structure comprises 304 residues: Heme A synthase (304 aa).

Residues 1–8 (MFNKRNLK) lie on the Cytoplasmic side of the membrane. Residues 9 to 29 (WLSVLATIIMAFVQLGGALVT) form a helical membrane-spanning segment. Residues 30 to 67 (KTGSEDGCGSSWPLCHGALLPQNLPIDTIIELSHRAVS) are Extracellular-facing. A disulfide bridge connects residues C37 and C44. Residue E60 is part of the active site. Residue H63 participates in heme o binding. A helical transmembrane segment spans residues 68–88 (GLSLIVVLWLAITAWKHIGYI). The Cytoplasmic portion of the chain corresponds to 89–93 (REVKP). A helical transmembrane segment spans residues 94-114 (LAIISIAFLLVQALIGAAAVI). Topologically, residues 115 to 123 (WQQNSYVLA) are extracellular. A helical membrane pass occupies residues 124 to 144 (LHFGISLISFSSVFVLMLIIF). H125 contributes to the heme o binding site. Residues 145–163 (EVDKKYEADELYIRKPLRR) are Cytoplasmic-facing. Residues 164-184 (LTWIMTGIVYLTIYTGALVRH) traverse the membrane as a helical segment. Over 185–215 (AKASLAYGGWPLPFHDIIPHTEQDWVQFAHR) the chain is Extracellular. H214 contributes to the heme b binding site. A helical membrane pass occupies residues 216–236 (GMAFITFFWIMITFIHAVKNY). Residues 237–244 (SENRTIRY) are Cytoplasmic-facing. Residues 245–265 (GYTTAFILIILQVITGALSVM) traverse the membrane as a helical segment. The Extracellular portion of the chain corresponds to 266-270 (TNVNL). Residues 271 to 291 (FIALLHALFITILFGMIAYFI) form a helical membrane-spanning segment. H276 is a binding site for heme b. Over 292–304 (MLMLRTIRSEKIK) the chain is Cytoplasmic.

This sequence belongs to the COX15/CtaA family. Type 1 subfamily. As to quaternary structure, interacts with CtaB. Heme b serves as cofactor.

The protein resides in the cell membrane. The catalysed reaction is Fe(II)-heme o + 2 A + H2O = Fe(II)-heme a + 2 AH2. Its pathway is porphyrin-containing compound metabolism; heme A biosynthesis; heme A from heme O: step 1/1. Functionally, catalyzes the conversion of heme O to heme A by two successive hydroxylations of the methyl group at C8. The first hydroxylation forms heme I, the second hydroxylation results in an unstable dihydroxymethyl group, which spontaneously dehydrates, resulting in the formyl group of heme A. The chain is Heme A synthase from Staphylococcus haemolyticus (strain JCSC1435).